The chain runs to 140 residues: Nucleoside diphosphate kinase (140 aa).

6 residues coordinate ATP: lysine 11, phenylalanine 59, arginine 87, threonine 93, arginine 104, and asparagine 114. The active-site Pros-phosphohistidine intermediate is the histidine 117.

The protein belongs to the NDK family. In terms of assembly, homotetramer. Mg(2+) serves as cofactor.

The protein resides in the cytoplasm. The catalysed reaction is a 2'-deoxyribonucleoside 5'-diphosphate + ATP = a 2'-deoxyribonucleoside 5'-triphosphate + ADP. It carries out the reaction a ribonucleoside 5'-diphosphate + ATP = a ribonucleoside 5'-triphosphate + ADP. In terms of biological role, major role in the synthesis of nucleoside triphosphates other than ATP. The ATP gamma phosphate is transferred to the NDP beta phosphate via a ping-pong mechanism, using a phosphorylated active-site intermediate. The protein is Nucleoside diphosphate kinase of Methylobacterium sp. (strain 4-46).